Consider the following 663-residue polypeptide: DNA ligase 1 (663 aa).

NAD(+) contacts are provided by residues 28–32 (DKEYD) and 76–77 (SL). Residue Lys-118 is the N6-AMP-lysine intermediate of the active site. NAD(+) is bound by residues Arg-139, Glu-173, and Lys-310. 4 residues coordinate Zn(2+): Cys-403, Cys-406, Cys-419, and Cys-425. The 81-residue stretch at 583–663 (VSESVFNDKT…KFEELIESVK (81 aa)) folds into the BRCT domain.

It belongs to the NAD-dependent DNA ligase family. LigA subfamily. Requires Mg(2+) as cofactor. Mn(2+) serves as cofactor.

It catalyses the reaction NAD(+) + (deoxyribonucleotide)n-3'-hydroxyl + 5'-phospho-(deoxyribonucleotide)m = (deoxyribonucleotide)n+m + AMP + beta-nicotinamide D-nucleotide.. Functionally, DNA ligase that catalyzes the formation of phosphodiester linkages between 5'-phosphoryl and 3'-hydroxyl groups in double-stranded DNA using NAD as a coenzyme and as the energy source for the reaction. It is essential for DNA replication and repair of damaged DNA. This chain is DNA ligase 1, found in Clostridium acetobutylicum (strain ATCC 824 / DSM 792 / JCM 1419 / IAM 19013 / LMG 5710 / NBRC 13948 / NRRL B-527 / VKM B-1787 / 2291 / W).